The primary structure comprises 328 residues: Phosphate acyltransferase (328 aa).

The protein belongs to the PlsX family. As to quaternary structure, homodimer. Probably interacts with PlsY.

It is found in the cytoplasm. The enzyme catalyses a fatty acyl-[ACP] + phosphate = an acyl phosphate + holo-[ACP]. It functions in the pathway lipid metabolism; phospholipid metabolism. In terms of biological role, catalyzes the reversible formation of acyl-phosphate (acyl-PO(4)) from acyl-[acyl-carrier-protein] (acyl-ACP). This enzyme utilizes acyl-ACP as fatty acyl donor, but not acyl-CoA. This is Phosphate acyltransferase from Campylobacter jejuni subsp. doylei (strain ATCC BAA-1458 / RM4099 / 269.97).